A 1609-amino-acid chain; its full sequence is MAHIQSIISNALLESVSGKNTLVNDLARRRMYDTAVEEFNARDRRPKVNFSKTISEEQTLLVSNAYPEFQITFYNTQNAVHSLAGGLRALELEYLMLQVPYGSPTYDIGGNFAAHLFKGRDYVHCCMPNLDIRDIMRHEGQKDSIEMYLSRLSRSNKVIPEFQREAFNRYAEAPNEVCCSKTFQDCRIHPPENSGRRYAVALHSLYDIPVHEFGAALISKNIHVCYAASILAEALLLDQTEVTLNEIGATFKREGDDVSFFFADESTLNYSHKYKNILHYVVKSYFPASSRIVYFKEFLVTRVNTWFCKFTKVDTYILYKSVRQVGCDSDQFYEAMEDAFAYKKTLAMFNTERAIFRDTASVNFWFPKMKDMVIVPLFEGSITSKKMTRSEVIVNRDFVYTVLNHIRTYQAKALTYQNVLSFVESIRSRVIINGVTARSEWDVDKAILQPLSMTFFLQTKLAALQDDIVMGKFRCLDKTTSELIWDEVGKFFGNVFPTIKERLVSRKILDVSENALKIKIPDLYVTWKDRFVAEYTKSEELPHLDIKKDLEEAEQMYDALSELSILKGADNFDIAKFKDMCKALDVSPDVAARVIVAVAENRSGLTLTFDKPTEENVAKALKSTASEAVVCLEPTSEEVNVNKFSIAEKGRLPVCAESHGLTNANLEHQELESLNDFHKACVDSVITKQMASVVYTGSLKVQQMKNYVDSLAASLSATVSNLCKSLKDEVGYDSDSREKVGVWDVTLKKWLLKPAAKGHSWGVVLDYKGKMFTALLSYEGDRMVTESDWRRVAVSSDTMVYSDIAKLQNLRKTMRDGEPHEPTAKMVLVDGVPGCGKYKGDFERFDLDEDLILVPGKQAAAMIRRRANSSGLIRATMDNVRTVDSLLMHPKPRSHKRLFIDEGLMLHTGCVNFLVLISGCDIAYIYGDTQQIPFINRVQNFPYPKHFEKLQVDEVEMRRTTLRCPGDVNFFLQSKYEGAVTTTSTVQRSVSSEMIGGKGVLNSVSKPLKGKIVTFTQADKFELEEKGYKNVNTVHEIQGETFEDVSLVRLTATPLTLISKSSPHVLVALTRHTKSFKYYTVVLDPLVQIISDLSSLSSFLLEMYMVEAGSRXQLQMDAVFKGHNLFVATPKSGDFPDLQFYYDVCLPGNSTILNKYDAVTMRLRDNSLNVKDCVLDFSKSIPMPKEVKPCLEPVLRTAAEPPRAAGLLENLVAMIKRNFNAPDLTGTIDIESTASVVVDKFFDSYFIKKEKYTKNIAGVMTKDSMMRWLENRKEVLLDDLANYNFTDLPAIDQYKHMIKAQPKQKLDLSIQNEYPALQTIVYHSKQINGILAGFSELTRLLLEAFDSKKFLFFTRKTPEQIQEFFSDLDSHVPMDVLELDISKYDKSQNEFHCAVEYEIWKRLGLNEFLAEVWKQGHRKTTLKDYIAGIKTCLWYQRKSGDVTTFIGNTVIIAACLGSMLPMEKVIKGAFCGDDSVLYFPKGLDFPDIQSCANLMWNFEAKLYRKRYGYFCGRYIIHHDKGAIVYYDPLKLISKLGAKHIKDYDHLEELRVSLCDVACSLGNWCLGFPQLNAAIKEVHKTAIDGSFAFNCVNKFLCDKFLFRTLFLNGC.

The methyltransferase stretch occupies residues 50–453 (FSKTISEEQT…DKAILQPLSM (404 aa)). The region spanning 72–281 (TFYNTQNAVH…HKYKNILHYV (210 aa)) is the Alphavirus-like MT domain. The (+)RNA virus helicase ATP-binding domain occupies 799–958 (MVYSDIAKLQ…KLQVDEVEMR (160 aa)). The segment at 828 to 1080 (LVDGVPGCGK…RHTKSFKYYT (253 aa)) is helicase. Residues 834–839 (GCGKYK), R866, 962–963 (LR), R1071, and 1092–1095 (DLSS) contribute to the ATP site. One can recognise a (+)RNA virus helicase C-terminal domain in the interval 959–1111 (RTTLRCPGDV…EMYMVEAGSR (153 aa)). One can recognise a RdRp catalytic domain in the interval 1374–1487 (MDVLELDISK…YFPKGLDFPD (114 aa)).

It belongs to the ssRNA positive-strand viruses RNA-directed RNA polymerase family. In terms of assembly, heterodimer of a large and a small subunit. Both large and small subunits interact, via an ATP bridge, with host protein Tm-1 (e.g. tomato Tm-1 AC A7M6E7 and AC A7M6E8).

It carries out the reaction RNA(n) + a ribonucleoside 5'-triphosphate = RNA(n+1) + diphosphate. The enzyme catalyses ATP + H2O = ADP + phosphate + H(+). Its activity is regulated as follows. In resistant plants, is bound by host protein Tm-1 (e.g tomato Tm-1 AC A7M6E7), thereby inhibiting replication complex activity. Functionally, is an RNA-dependent RNA polymerase active in viral RNA replication. In terms of biological role, is a methyltransferase active in RNA capping and an RNA helicase. Methyltransferase displays a cytoplasmic capping enzyme activity. This function is necessary since all viral RNAs are synthesized in the cytoplasm, and host capping enzymes are restricted to the nucleus. Helicase region probably exhibits NTPase and RNA unwinding activities (Potential). It also acts as a suppressor of RNA-mediated gene silencing, also known as post-transcriptional gene silencing (PTGS), a mechanism of plant viral defense that limits the accumulation of viral RNAs. May mediate silencing suppression through either inhibition of HEN1-mediated siRNA or siRNA demethylation. This is Replicase large subunit from Capsicum annuum (Capsicum pepper).